Here is a 266-residue protein sequence, read N- to C-terminus: Nuclease (266 aa).

A signal peptide spans 1-21 (MRFNNKMLALAALLFAAQASA). Cys-30 and Cys-34 are disulfide-bonded. Catalysis depends on His-110, which acts as the Proton acceptor. Residue Asn-140 coordinates Mg(2+). A disulfide bridge links Cys-222 with Cys-264.

It belongs to the DNA/RNA non-specific endonuclease family. As to quaternary structure, homodimer. Requires Mg(2+) as cofactor.

It is found in the secreted. It catalyses the reaction Endonucleolytic cleavage to 5'-phosphomononucleotide and 5'-phosphooligonucleotide end-products.. Catalyzes the hydrolysis of both DNA and RNA, double- or single-stranded, at the 3'position of the phosphodiester bond to produce 5'-phosphorylated mono-, di-, tri- and tetranucleotides. DNA is a slightly better substrate than RNA. The polypeptide is Nuclease (nucA) (Serratia marcescens).